Consider the following 334-residue polypeptide: Holliday junction branch migration complex subunit RuvB (334 aa).

The large ATPase domain (RuvB-L) stretch occupies residues 4–184 (EDRLISGTQK…FGIVQRLEYY (181 aa)). ATP-binding positions include isoleucine 23, arginine 24, glycine 65, lysine 68, threonine 69, threonine 70, 131–133 (EDY), arginine 174, tyrosine 184, and arginine 221. Threonine 69 is a binding site for Mg(2+). The segment at 185–255 (DLKSLTRIVL…VAKLALDMLE (71 aa)) is small ATPAse domain (RuvB-S). A head domain (RuvB-H) region spans residues 258 to 334 (NEGFDYMDRK…YLHFGFDKPQ (77 aa)). Arginine 313 and arginine 318 together coordinate DNA.

The protein belongs to the RuvB family. As to quaternary structure, homohexamer. Forms an RuvA(8)-RuvB(12)-Holliday junction (HJ) complex. HJ DNA is sandwiched between 2 RuvA tetramers; dsDNA enters through RuvA and exits via RuvB. An RuvB hexamer assembles on each DNA strand where it exits the tetramer. Each RuvB hexamer is contacted by two RuvA subunits (via domain III) on 2 adjacent RuvB subunits; this complex drives branch migration. In the full resolvosome a probable DNA-RuvA(4)-RuvB(12)-RuvC(2) complex forms which resolves the HJ.

The protein localises to the cytoplasm. It catalyses the reaction ATP + H2O = ADP + phosphate + H(+). Functionally, the RuvA-RuvB-RuvC complex processes Holliday junction (HJ) DNA during genetic recombination and DNA repair, while the RuvA-RuvB complex plays an important role in the rescue of blocked DNA replication forks via replication fork reversal (RFR). RuvA specifically binds to HJ cruciform DNA, conferring on it an open structure. The RuvB hexamer acts as an ATP-dependent pump, pulling dsDNA into and through the RuvAB complex. RuvB forms 2 homohexamers on either side of HJ DNA bound by 1 or 2 RuvA tetramers; 4 subunits per hexamer contact DNA at a time. Coordinated motions by a converter formed by DNA-disengaged RuvB subunits stimulates ATP hydrolysis and nucleotide exchange. Immobilization of the converter enables RuvB to convert the ATP-contained energy into a lever motion, pulling 2 nucleotides of DNA out of the RuvA tetramer per ATP hydrolyzed, thus driving DNA branch migration. The RuvB motors rotate together with the DNA substrate, which together with the progressing nucleotide cycle form the mechanistic basis for DNA recombination by continuous HJ branch migration. Branch migration allows RuvC to scan DNA until it finds its consensus sequence, where it cleaves and resolves cruciform DNA. The protein is Holliday junction branch migration complex subunit RuvB of Psychromonas ingrahamii (strain DSM 17664 / CCUG 51855 / 37).